Reading from the N-terminus, the 1427-residue chain is Lysophospholipase NTE1 (1427 aa).

Residues 1–60 (MDSLHVSSTSVLVDVVEAVETATSLVVDTAEAVATEQATPTAVISNALARSAYAAHTSLS) lie on the Cytoplasmic side of the membrane. Residues 61–81 (YLAWAFGLWFLRLIGWVCYGI) form a helical membrane-spanning segment. Residues 82 to 96 (PTYVLGLLGRTINIS) are Lumenal-facing. A helical membrane pass occupies residues 97-117 (LQFSSLLLILIALVTVVVAVV). Residues 118–1427 (RYKYLTVYSR…KRTIARRNSI (1310 aa)) are Cytoplasmic-facing. The span at 281 to 296 (PMTSASDVPNMSLSSD) shows a compositional bias: polar residues. The segment at 281 to 315 (PMTSASDVPNMSLSSDGSDDLQKGEPQFGEPRLSE) is disordered. A nucleoside 3',5'-cyclic phosphate contacts are provided by residues 615-735 (LMAA…LTKV) and 731-870 (SLTK…VASR). Residues 787 to 807 (GIVGGESGDAKDGKSHRKNLT) are disordered. The 165-residue stretch at 1124–1288 (LVLGGGGARG…VDNLPVSEMK (165 aa)) folds into the PNPLA domain. Positions 1128-1133 (GGGARG) match the GXGXXG motif. The GXSXG motif lies at 1155–1159 (GTSIG). Catalysis depends on Ser-1157, which acts as the Nucleophile. The Proton acceptor role is filled by Asp-1275. Residues 1275 to 1277 (DGG) carry the DGA/G motif.

It belongs to the NTE family.

The protein localises to the endoplasmic reticulum membrane. The catalysed reaction is a 1-acyl-sn-glycero-3-phosphocholine + H2O = sn-glycerol 3-phosphocholine + a fatty acid + H(+). With respect to regulation, inhibited by organophosphorus esters. Intracellular phospholipase B that catalyzes the double deacylation of phosphatidylcholine (PC) to glycerophosphocholine (GroPCho). Plays an important role in membrane lipid homeostasis. Responsible for the rapid PC turnover in response to inositol, elevated temperatures, or when choline is present in the growth medium. The chain is Lysophospholipase NTE1 (NTE1) from Yarrowia lipolytica (strain CLIB 122 / E 150) (Yeast).